An 871-amino-acid polypeptide reads, in one-letter code: Speckle targeted PIP5K1A-regulated poly(A) polymerase (871 aa).

A Matrin-type zinc finger spans residues 16–46 (FRCCLCHITTANQPSLDAHLGGRKHRHLVEL). The region spanning 56-128 (RSVFVSGFPR…RRLRVRPREQ (73 aa)) is the RRM domain. Position 205 (Ser205) interacts with ATP. Positions 216 and 218 each coordinate Mg(2+). UTP is bound by residues Asp216 and Asp218. The interval 252–321 (QALACTPASP…QEDQGDGDQG (70 aa)) is disordered. Residues 259–269 (ASPPDSQPPAS) show a composition bias toward pro residues. Asn392 is an ATP binding site. 4 residues coordinate UTP: Asn392, Arg414, Tyr432, and His547. The PAP-associated domain occupies 489 to 547 (LSSLLAQFFSCVSCWDLRGSLLSLREGQALSVAGGLPSNLSEGLRLGPMNLQDPFDLSH). The segment at 596–871 (SSPSSILSAT…LPQALRNLLK (276 aa)) is KA1; binds the bulging loops of U6 snRNA but is dispensable for terminal uridylyltransferase activity. The tract at residues 636–684 (GTKRLRSEGGGPGEPPQGGTSKRAKLDGQKKSCEEGPEEQQGCAGEHGE) is disordered. Residues 659 to 669 (AKLDGQKKSCE) are compositionally biased toward basic and acidic residues. Ser748 carries the phosphoserine modification.

This sequence belongs to the DNA polymerase type-B-like family. Associates with the cleavage and polyadenylation specificity factor (CPSF) complex. Interacts with CPSF1 and CPSF3; the interaction is direct. Interacts with PIP5K1A. Mg(2+) serves as cofactor. It depends on Mn(2+) as a cofactor. In terms of processing, phosphorylated by CK1 in the proline-rich (Pro-rich) region.

Its subcellular location is the nucleus. It localises to the nucleolus. The protein resides in the nucleus speckle. It carries out the reaction RNA(n) + UTP = RNA(n)-3'-uridine ribonucleotide + diphosphate. The catalysed reaction is RNA(n) + ATP = RNA(n)-3'-adenine ribonucleotide + diphosphate. With respect to regulation, adenylyltransferase activity is specifically phosphatidylinositol 4,5-bisphosphate (PtdIns(4,5)P2). Poly(A) polymerase that creates the 3'-poly(A) tail of specific pre-mRNAs. Localizes to nuclear speckles together with PIP5K1A and mediates polyadenylation of a select set of mRNAs, such as HMOX1. In addition to polyadenylation, it is also required for the 3'-end cleavage of pre-mRNAs: binds to the 3'UTR of targeted pre-mRNAs and promotes the recruitment and assembly of the CPSF complex on the 3'UTR of pre-mRNAs. In addition to adenylyltransferase activity, also has uridylyltransferase activity. However, the ATP ratio is higher than UTP in cells, suggesting that it functions primarily as a poly(A) polymerase. Acts as a specific terminal uridylyltransferase for U6 snRNA in vitro: responsible for a controlled elongation reaction that results in the restoration of the four 3'-terminal UMP-residues found in newly transcribed U6 snRNA. Not involved in replication-dependent histone mRNA degradation. This chain is Speckle targeted PIP5K1A-regulated poly(A) polymerase (TUT1), found in Bos taurus (Bovine).